The primary structure comprises 291 residues: N-acetylmannosamine kinase (291 aa).

ATP contacts are provided by residues 5 to 12 and 132 to 139; these read AIDIGGTK and GVGGGVVS. The Zn(2+) site is built by H156, C166, C168, and C173.

Belongs to the ROK (NagC/XylR) family. NanK subfamily. As to quaternary structure, homodimer.

It carries out the reaction an N-acyl-D-mannosamine + ATP = an N-acyl-D-mannosamine 6-phosphate + ADP + H(+). Its pathway is amino-sugar metabolism; N-acetylneuraminate degradation; D-fructose 6-phosphate from N-acetylneuraminate: step 2/5. Functionally, catalyzes the phosphorylation of N-acetylmannosamine (ManNAc) to ManNAc-6-P. The chain is N-acetylmannosamine kinase from Escherichia coli O9:H4 (strain HS).